A 281-amino-acid polypeptide reads, in one-letter code: Rhomboid protease AarA (281 aa).

7 consecutive transmembrane segments (helical) span residues 16-36 (FSLG…AVYF), 76-96 (MLHS…VIGI), 105-125 (FKLL…SAYW), 145-165 (IGVG…IYLI), 185-205 (QLYN…QSGV), 208-228 (AAHI…ILVP), and 233-253 (VANL…IYLY). The active-site Nucleophile is the S150. H210 (charge relay system) is an active-site residue.

The protein belongs to the peptidase S54 family.

The protein resides in the cell membrane. It catalyses the reaction Cleaves type-1 transmembrane domains using a catalytic dyad composed of serine and histidine that are contributed by different transmembrane domains.. Rhomboid serine protease that catalyzes intramembrane proteolysis. Mediates quorum-sensing and the subsequent regulation of target genes via activation of the Tat protein export system. Catalyzes the proteolytic activation of TatA by removal of its N-terminal extension. The sequence is that of Rhomboid protease AarA (aarA) from Providencia stuartii.